The following is a 313-amino-acid chain: E3 ubiquitin-protein ligase siah2 (313 aa).

The disordered stretch occupies residues 1-49 (MSRPSSAGPCASKPCGKQKQPPPPPPHAPSLPATISGGPGASAPPAPTA). Pro residues predominate over residues 20–29 (QPPPPPPHAP). The RING-type zinc finger occupies 69 to 104 (CPVCFDYVLPPILQCQAGHLVCNQCRQKLSCCPTCR). Residues 119-311 (VASAVLFPCK…LGINVTISTC (193 aa)) form an SBD region. The segment at 122–182 (AVLFPCKYAS…VMQHLTHSHK (61 aa)) adopts an SIAH-type zinc-finger fold. Zn(2+)-binding residues include cysteine 127, cysteine 134, histidine 146, cysteine 150, cysteine 157, cysteine 164, histidine 176, and histidine 181.

The protein belongs to the SINA (Seven in absentia) family. As to quaternary structure, homodimer. Widely expressed in early embryos until stage 40. It is then expressed in brain, spinal cord and in the developing and mature eye.

It localises to the cytoplasm. It carries out the reaction S-ubiquitinyl-[E2 ubiquitin-conjugating enzyme]-L-cysteine + [acceptor protein]-L-lysine = [E2 ubiquitin-conjugating enzyme]-L-cysteine + N(6)-ubiquitinyl-[acceptor protein]-L-lysine.. The protein operates within protein modification; protein ubiquitination. In terms of biological role, E3 ubiquitin-protein ligase that mediates ubiquitination and subsequent proteasomal degradation of target proteins. E3 ubiquitin ligases accept ubiquitin from an E2 ubiquitin-conjugating enzyme in the form of a thioester and then directly transfers the ubiquitin to targeted substrates. Involved in eye morphogenesis, probably triggers the ubiquitin-mediated degradation of different substrates. May play a role in the regulation of the cellular clock function. The polypeptide is E3 ubiquitin-protein ligase siah2 (siah2) (Xenopus laevis (African clawed frog)).